We begin with the raw amino-acid sequence, 571 residues long: FAD-linked oxidoreductase patO (571 aa).

The signal sequence occupies residues 1-23 (MRLHQSPPRLLVCILSVLQVSAG). N-linked (GlcNAc...) asparagine glycosylation is found at N47, N101, N125, N179, N341, N374, N380, N421, N445, and N480. Residues 115 to 294 (TLGAMVRYAV…YAVTVKTFPD (180 aa)) form the FAD-binding PCMH-type domain.

It belongs to the oxygen-dependent FAD-linked oxidoreductase family. Requires FAD as cofactor.

The protein localises to the vacuole lumen. It participates in mycotoxin biosynthesis; patulin biosynthesis. In terms of biological role, FAD-linked oxidoreductase; part of the gene cluster that mediates the biosynthesis of patulin, an acetate-derived tetraketide mycotoxin produced by several fungal species that shows antimicrobial properties against several bacteria. PatO acts with patJ in the vacuole to convert gentisyl alcohol to isoepoxydon. The pathway begins with the synthesis of 6-methylsalicylic acid by the polyketide synthase (PKS) patK via condensation of acetate and malonate units. The 6-methylsalicylic acid decarboxylase patG then catalyzes the decarboxylation of 6-methylsalicylic acid to yield m-cresol (also known as 3-methylphenol). These first reactions occur in the cytosol. The intermediate m-cresol is then transported into the endoplasmic reticulum where the cytochrome P450 monooxygenase patH converts it to m-hydroxybenzyl alcohol, which is further converted to gentisyl alcohol by the cytochrome P450 monooxygenase patI. The oxidoreductases patJ and patO further convert gentisyl alcohol to isoepoxydon in the vacuole. PatN catalyzes then the transformation of isoepoxydon into phyllostine. The cluster protein patF is responsible for the conversion from phyllostine to neopatulin whereas the alcohol dehydrogenase patD converts neopatulin to E-ascladiol. The steps between isoepoxydon and E-ascladiol occur in the cytosol, and E-ascladiol is probably secreted to the extracellular space by one of the cluster-specific transporters patC or patM. Finally, the secreted patulin synthase patE catalyzes the conversion of E-ascladiol to patulin. The chain is FAD-linked oxidoreductase patO from Penicillium expansum (Blue mold rot fungus).